We begin with the raw amino-acid sequence, 247 residues long: MSLQGKVALVTGASRGIGQAIALELGRLGAVVIGTATSASGAEKIAETLKANGVEGAGLVLDVSSDESVAATLEHIQQHLGQPLIVVNNAGITRDNLLVRMKDDEWFDVVNTNLNSLYRLSKAVLRGMTKARWGRIINIGSVVGAMGNAGQTNYAAAKAGLEGFTRALAREVGSRAITVNAVAPGFIDTDMTRELPEAQREALLGQIPLGRLGQAEEIAKVVGFLASDGAAYVTGATVPVNGGMYMS.

NADP(+) contacts are provided by residues 12 to 15 (GASR), threonine 37, 62 to 63 (DV), and asparagine 89. Residue serine 141 participates in substrate binding. The active-site Proton acceptor is the tyrosine 154. NADP(+) contacts are provided by residues 154–158 (YAAAK) and isoleucine 187.

This sequence belongs to the short-chain dehydrogenases/reductases (SDR) family. In terms of assembly, homotetramer.

The catalysed reaction is a (3R)-hydroxyacyl-[ACP] + NADP(+) = a 3-oxoacyl-[ACP] + NADPH + H(+). Its pathway is lipid metabolism; fatty acid biosynthesis. Functionally, catalyzes the NADPH-dependent reduction of beta-ketoacyl-ACP substrates to beta-hydroxyacyl-ACP products, the first reductive step in the elongation cycle of fatty acid biosynthesis. The chain is 3-oxoacyl-[acyl-carrier-protein] reductase FabG (fabG) from Pseudomonas aeruginosa (strain ATCC 15692 / DSM 22644 / CIP 104116 / JCM 14847 / LMG 12228 / 1C / PRS 101 / PAO1).